The sequence spans 439 residues: MLPFLKAPADAPLMTDKYEIDARYRYWRRHILLTIWLGYALFYFTRKSFNAAVPEILANGVLSRSDIGLLATLFYITYGVSKFVSGIVSDRSNARYFMGIGLIATGIINILFGFSTSLWAFAVLWVLNAFFQGWGSPVCARLLTAWYSRTERGGWWALWNTAHNVGGALIPIVMAAAALHYGWRAGMMIAGCMAIVVGIFLCWRLRDRPQALGLPAVGEWRHDALEIAQQQEGAGLTRKEILTKYVLLNPYIWLLSFCYVLVYVVRAAINDWGNLYMSETLGVDLVTANTAVTMFELGGFIGALVAGWGSDKLFNGNRGPMNLIFAAGILLSVGSLWLMPFASYVMQATCFFTIGFFVFGPQMLIGMAAAECSHKEAAGAATGFVGLFAYLGASLAGWPLAKVLDTWHWSGFFVVISIAAGISALLLLPFLNAQTPREA.

Topologically, residues 1–25 (MLPFLKAPADAPLMTDKYEIDARYR) are cytoplasmic. A helical transmembrane segment spans residues 26–45 (YWRRHILLTIWLGYALFYFT). At 46–66 (RKSFNAAVPEILANGVLSRSD) the chain is on the periplasmic side. The chain crosses the membrane as a helical span at residues 67–87 (IGLLATLFYITYGVSKFVSGI). Topologically, residues 88–95 (VSDRSNAR) are cytoplasmic. Residues 96–118 (YFMGIGLIATGIINILFGFSTSL) traverse the membrane as a helical segment. Residues 119-121 (WAF) are Periplasmic-facing. The helical transmembrane segment at 122–144 (AVLWVLNAFFQGWGSPVCARLLT) threads the bilayer. Over 145–162 (AWYSRTERGGWWALWNTA) the chain is Cytoplasmic. Residues 163 to 183 (HNVGGALIPIVMAAAALHYGW) form a helical membrane-spanning segment. A topological domain (periplasmic) is located at residue R184. The helical transmembrane segment at 185–205 (AGMMIAGCMAIVVGIFLCWRL) threads the bilayer. At 206 to 244 (RDRPQALGLPAVGEWRHDALEIAQQQEGAGLTRKEILTK) the chain is on the cytoplasmic side. The helical transmembrane segment at 245 to 265 (YVLLNPYIWLLSFCYVLVYVV) threads the bilayer. Topologically, residues 266–289 (RAAINDWGNLYMSETLGVDLVTAN) are periplasmic. Residues 290 to 310 (TAVTMFELGGFIGALVAGWGS) form a helical membrane-spanning segment. Residues 311-322 (DKLFNGNRGPMN) are Cytoplasmic-facing. Residues 323–343 (LIFAAGILLSVGSLWLMPFAS) traverse the membrane as a helical segment. The Periplasmic segment spans residues 344–349 (YVMQAT). Residues 350 to 370 (CFFTIGFFVFGPQMLIGMAAA) traverse the membrane as a helical segment. Topologically, residues 371–379 (ECSHKEAAG) are cytoplasmic. A helical membrane pass occupies residues 380-400 (AATGFVGLFAYLGASLAGWPL). The Periplasmic portion of the chain corresponds to 401–410 (AKVLDTWHWS). The chain crosses the membrane as a helical span at residues 411–431 (GFFVVISIAAGISALLLLPFL). Topologically, residues 432–439 (NAQTPREA) are cytoplasmic.

The protein belongs to the major facilitator superfamily. Organophosphate:Pi antiporter (OPA) (TC 2.A.1.4) family.

It is found in the cell inner membrane. In terms of biological role, part of the UhpABC signaling cascade that controls the expression of the hexose phosphate transporter UhpT. UhpC senses external glucose-6-phosphate and interacts with the histidine kinase UhpB, leading to the stimulation of the autokinase activity of UhpB. The protein is Membrane sensor protein UhpC of Escherichia coli (strain K12).